The primary structure comprises 316 residues: Olfactory receptor 5P79 (316 aa).

Residues 1-28 (MGILKDGNHTAVTEFILLGLTDDPVLKV) lie on the Extracellular side of the membrane. N-linked (GlcNAc...) asparagine glycosylation is present at N8. A helical transmembrane segment spans residues 29-49 (VLFTIILCIYLVTVSGNLSTI). Residues 50–57 (LLIRVSSQ) are Cytoplasmic-facing. Residues 58–78 (LHHPMYFFLSHLASVDIGISS) form a helical membrane-spanning segment. Residues 79 to 102 (SVTPNMLVNFLLERSTISYLGCGI) are Extracellular-facing. The cysteines at positions 100 and 192 are disulfide-linked. The helical transmembrane segment at 103–123 (QLGSGAFFGSTESFLLAAMAY) threads the bilayer. The Cytoplasmic segment spans residues 124–136 (DHFMAICNPLLYS). Residues 137-157 (TKMSTQVCIQLLVGSYIGGFL) traverse the membrane as a helical segment. The Extracellular portion of the chain corresponds to 158-199 (NASSFILSFFSFLFCGPNKVNHFFCDFTPLVELSCSDNSVLL). A helical membrane pass occupies residues 200-220 (ILDSFSAGSIIVITVLVIAIS). Residues 221–240 (YTYILITILKMHSTEGRHKA) are Cytoplasmic-facing. Residues 241–261 (FSTCTSHLTAVTVFYGTVTFI) traverse the membrane as a helical segment. The Extracellular segment spans residues 262–274 (YVMPKSSYSTDQN). A helical transmembrane segment spans residues 275 to 297 (KVLSVFYMIAIAIPMLNPLIYSL). The Cytoplasmic segment spans residues 298 to 316 (RNNEIKNALKRQLSKKTFS).

It belongs to the G-protein coupled receptor 1 family.

It localises to the cell membrane. Functionally, potential odorant receptor. The sequence is that of Olfactory receptor 5P79 from Mus musculus (Mouse).